The following is a 909-amino-acid chain: Coatomer subunit beta'-3 (909 aa).

WD repeat units lie at residues 13–52 (QRSERVKSVDLHPTEPWILASLYSGTVCIWNYQTQTITKS), 55–94 (VTELPVRSAKFIPRKQWVVAGADDMYIRVYNYNTMDKVKV), 97–136 (AHSDYIRCVAVHPTLPYVLSSSDDMLIKLWDWENGWACTQ), 140–180 (GHSH…PNFT), 183–224 (AHQK…CVQT), 227–266 (GHTHNVSAVCFHPELPIIITGSEDGTVRIWHATTYRLENT), 269–309 (YGLE…ASMD), 351–390 (TCDLYPQSLKHNPNGRFVVVCGDGEYIIYTALAWRNRSFG), and 461–501 (QIDV…SHFD). Residues 862–909 (EENGHVENEGDEEEQQEEEVNEEEGVVDADSTDGAVLVNGSEVLTPHP) form a disordered region. Residues 870–892 (EGDEEEQQEEEVNEEEGVVDADS) are compositionally biased toward acidic residues.

This sequence belongs to the WD repeat COPB2 family. As to quaternary structure, oligomeric complex that consists of at least the alpha, beta, beta', gamma, delta, epsilon and zeta subunits.

The protein localises to the cytoplasm. The protein resides in the golgi apparatus membrane. It localises to the cytoplasmic vesicle. It is found in the COPI-coated vesicle membrane. Its function is as follows. The coatomer is a cytosolic protein complex that binds to dilysine motifs and reversibly associates with Golgi non-clathrin-coated vesicles, which further mediate biosynthetic protein transport from the ER, via the Golgi up to the trans Golgi network. Coatomer complex is required for budding from Golgi membranes, and is essential for the retrograde Golgi-to-ER transport of dilysine-tagged proteins. This is Coatomer subunit beta'-3 from Arabidopsis thaliana (Mouse-ear cress).